Reading from the N-terminus, the 38-residue chain is IFINVKCSLPQQCLRPCKDRFGQHAGGKCINGKCKCYP.

3 disulfides stabilise this stretch: cysteine 7–cysteine 29, cysteine 13–cysteine 34, and cysteine 17–cysteine 36.

In terms of tissue distribution, expressed by the venom gland.

The protein localises to the secreted. Blocks human voltage-gated potassium (Kv) channel Kv1.2/KCNA2. Does not inhibit human Kv1.1/KCNA1 at 100nM concentration. The polypeptide is Potassium channel toxin alpha-KTx 2.10 (Centruroides bonito (Scorpion)).